The sequence spans 155 residues: 6,7-dimethyl-8-ribityllumazine synthase (155 aa).

Residues Trp24, 58–60 (AFE), and 82–84 (AVI) contribute to the 5-amino-6-(D-ribitylamino)uracil site. (2S)-2-hydroxy-3-oxobutyl phosphate is bound at residue 87–88 (GT). His90 functions as the Proton donor in the catalytic mechanism. Phe115 contributes to the 5-amino-6-(D-ribitylamino)uracil binding site. (2S)-2-hydroxy-3-oxobutyl phosphate is bound at residue Arg129.

It belongs to the DMRL synthase family. In terms of assembly, forms an icosahedral capsid composed of 60 subunits, arranged as a dodecamer of pentamers.

The enzyme catalyses (2S)-2-hydroxy-3-oxobutyl phosphate + 5-amino-6-(D-ribitylamino)uracil = 6,7-dimethyl-8-(1-D-ribityl)lumazine + phosphate + 2 H2O + H(+). It functions in the pathway cofactor biosynthesis; riboflavin biosynthesis; riboflavin from 2-hydroxy-3-oxobutyl phosphate and 5-amino-6-(D-ribitylamino)uracil: step 1/2. Its function is as follows. Catalyzes the formation of 6,7-dimethyl-8-ribityllumazine by condensation of 5-amino-6-(D-ribitylamino)uracil with 3,4-dihydroxy-2-butanone 4-phosphate. This is the penultimate step in the biosynthesis of riboflavin. This chain is 6,7-dimethyl-8-ribityllumazine synthase, found in Saccharophagus degradans (strain 2-40 / ATCC 43961 / DSM 17024).